A 379-amino-acid polypeptide reads, in one-letter code: Carbamoyl phosphate synthase small chain (379 aa).

Residues 1 to 187 (MNFTPALLAL…GSGHAPAPAS (187 aa)) are CPSase. 3 residues coordinate L-glutamine: Ser48, Gly239, and Gly241. The Glutamine amidotransferase type-1 domain occupies 191 to 378 (KVVAYDFGVK…IELMKPQGVR (188 aa)). Cys267 serves as the catalytic Nucleophile. Positions 268, 271, 309, 311, and 312 each coordinate L-glutamine. Active-site residues include His351 and Glu353.

The protein belongs to the CarA family. Composed of two chains; the small (or glutamine) chain promotes the hydrolysis of glutamine to ammonia, which is used by the large (or ammonia) chain to synthesize carbamoyl phosphate. Tetramer of heterodimers (alpha,beta)4.

The enzyme catalyses hydrogencarbonate + L-glutamine + 2 ATP + H2O = carbamoyl phosphate + L-glutamate + 2 ADP + phosphate + 2 H(+). The catalysed reaction is L-glutamine + H2O = L-glutamate + NH4(+). It functions in the pathway amino-acid biosynthesis; L-arginine biosynthesis; carbamoyl phosphate from bicarbonate: step 1/1. The protein operates within pyrimidine metabolism; UMP biosynthesis via de novo pathway; (S)-dihydroorotate from bicarbonate: step 1/3. Its function is as follows. Small subunit of the glutamine-dependent carbamoyl phosphate synthetase (CPSase). CPSase catalyzes the formation of carbamoyl phosphate from the ammonia moiety of glutamine, carbonate, and phosphate donated by ATP, constituting the first step of 2 biosynthetic pathways, one leading to arginine and/or urea and the other to pyrimidine nucleotides. The small subunit (glutamine amidotransferase) binds and cleaves glutamine to supply the large subunit with the substrate ammonia. The chain is Carbamoyl phosphate synthase small chain from Thioalkalivibrio sulfidiphilus (strain HL-EbGR7).